The sequence spans 58 residues: Large ribosomal subunit protein eL24 (58 aa).

Residues cysteine 6, cysteine 9, cysteine 32, and cysteine 36 each coordinate Zn(2+). The C4-type zinc finger occupies 6 to 36 (CAFCGADILPGYGIMYVKTDGTTLRFCSRKC).

The protein belongs to the eukaryotic ribosomal protein eL24 family. Part of the 50S ribosomal subunit. Forms a cluster with proteins L3 and L14. Zn(2+) is required as a cofactor.

In terms of biological role, binds to the 23S rRNA. The sequence is that of Large ribosomal subunit protein eL24 from Pyrobaculum islandicum (strain DSM 4184 / JCM 9189 / GEO3).